A 117-amino-acid chain; its full sequence is SGSCQFKTCWHVTPEFRLVSSVLKEKFQRATFINSHNKNTGVFHPRRLKKKRLAKELVYFEKSPDFCERDTKVDSPGTQGRVCNKTSHQMDSCGNLCCGRGHNILMQTPSERCNCRF.

The O-palmitoleoyl serine; by PORCN moiety is linked to residue Ser-1. Cys-83 and Cys-98 form a disulfide bridge. Asn-84 carries an N-linked (GlcNAc...) asparagine glycan.

Belongs to the Wnt family. In terms of processing, palmitoleoylation is required for efficient binding to frizzled receptors. Depalmitoleoylation leads to Wnt signaling pathway inhibition.

The protein localises to the secreted. Its subcellular location is the extracellular space. It localises to the extracellular matrix. In terms of biological role, member of the Wnt ligand gene family that encodes for secreted proteins, which activate the Wnt signaling cascade. Involved in neurogenesis. Performs a partially redundant function with wnt1 in the formation of the midbrain-hindbrain boundary (MHB) organizer. This chain is Protein Wnt-10b (WNT-10B), found in Plethodon jordani (Red-cheeked salamander).